The chain runs to 279 residues: Elongation factor Ts (279 aa).

The involved in Mg(2+) ion dislocation from EF-Tu stretch occupies residues 80–83 (TDFV).

Belongs to the EF-Ts family.

Its subcellular location is the cytoplasm. Associates with the EF-Tu.GDP complex and induces the exchange of GDP to GTP. It remains bound to the aminoacyl-tRNA.EF-Tu.GTP complex up to the GTP hydrolysis stage on the ribosome. This is Elongation factor Ts (tsf) from Borreliella burgdorferi (strain ATCC 35210 / DSM 4680 / CIP 102532 / B31) (Borrelia burgdorferi).